The chain runs to 354 residues: Peptide chain release factor 1 (354 aa).

Glutamine 230 bears the N5-methylglutamine mark.

The protein belongs to the prokaryotic/mitochondrial release factor family. In terms of processing, methylated by PrmC. Methylation increases the termination efficiency of RF1.

The protein localises to the cytoplasm. Its function is as follows. Peptide chain release factor 1 directs the termination of translation in response to the peptide chain termination codons UAG and UAA. The protein is Peptide chain release factor 1 of Rhodospirillum rubrum (strain ATCC 11170 / ATH 1.1.1 / DSM 467 / LMG 4362 / NCIMB 8255 / S1).